The following is a 32-amino-acid chain: Cytochrome b6-f complex subunit 6 (32 aa).

The helical transmembrane segment at 6 to 26 threads the bilayer; the sequence is VFYIVFIALFFGIAVGIIFAI.

This sequence belongs to the PetL family. In terms of assembly, the 4 large subunits of the cytochrome b6-f complex are cytochrome b6, subunit IV (17 kDa polypeptide, PetD), cytochrome f and the Rieske protein, while the 4 small subunits are PetG, PetL, PetM and PetN. The complex functions as a dimer.

The protein localises to the cellular thylakoid membrane. Component of the cytochrome b6-f complex, which mediates electron transfer between photosystem II (PSII) and photosystem I (PSI), cyclic electron flow around PSI, and state transitions. PetL is important for photoautotrophic growth as well as for electron transfer efficiency and stability of the cytochrome b6-f complex. The polypeptide is Cytochrome b6-f complex subunit 6 (Mastigocladus laminosus (Fischerella sp.)).